The following is a 317-amino-acid chain: Transaldolase (317 aa).

Catalysis depends on K126, which acts as the Schiff-base intermediate with substrate.

It belongs to the transaldolase family. Type 1 subfamily. Homodimer.

Its subcellular location is the cytoplasm. The enzyme catalyses D-sedoheptulose 7-phosphate + D-glyceraldehyde 3-phosphate = D-erythrose 4-phosphate + beta-D-fructose 6-phosphate. The protein operates within carbohydrate degradation; pentose phosphate pathway; D-glyceraldehyde 3-phosphate and beta-D-fructose 6-phosphate from D-ribose 5-phosphate and D-xylulose 5-phosphate (non-oxidative stage): step 2/3. Transaldolase is important for the balance of metabolites in the pentose-phosphate pathway. The sequence is that of Transaldolase from Burkholderia cenocepacia (strain ATCC BAA-245 / DSM 16553 / LMG 16656 / NCTC 13227 / J2315 / CF5610) (Burkholderia cepacia (strain J2315)).